The sequence spans 784 residues: Cas scaffolding protein family member 4 (784 aa).

The region spanning 11-73 (PKALLARALY…PANRLQILEE (63 aa)) is the SH3 domain. Phosphoserine occurs at positions 197, 246, 302, 373, and 387. Residues 343 to 376 (TPNIYDVPRAMPDVPQAGKELGKAGGPSENSVDH) form a disordered region. A coiled-coil region spans residues 466–536 (RDSLEANIDA…LLETKERLES (71 aa)). Positions 614 to 635 (KEGESYQRKAPFQKQRASEQPP) are disordered.

The protein belongs to the CAS family. In terms of assembly, interacts (via SH3 domain) with PTK2/FAK1 (via C-terminus). Post-translationally, phosphorylated on tyrosines by SRC.

The protein localises to the cytoplasm. Its subcellular location is the cytoskeleton. It localises to the cell junction. The protein resides in the focal adhesion. In terms of biological role, docking protein that plays a role in tyrosine kinase-based signaling related to cell adhesion and cell spreading. Regulates PTK2/FAK1 activity, focal adhesion integrity, and cell spreading. This is Cas scaffolding protein family member 4 from Sus scrofa (Pig).